The primary structure comprises 225 residues: Phosphoribosylformylglycinamidine synthase subunit PurQ (225 aa).

One can recognise a Glutamine amidotransferase type-1 domain in the interval 4–225 (RVGVITFPGT…YSVLDSVISA (222 aa)). C87 acts as the Nucleophile in catalysis. Catalysis depends on residues H196 and E198.

As to quaternary structure, part of the FGAM synthase complex composed of 1 PurL, 1 PurQ and 2 PurS subunits.

The protein resides in the cytoplasm. It catalyses the reaction N(2)-formyl-N(1)-(5-phospho-beta-D-ribosyl)glycinamide + L-glutamine + ATP + H2O = 2-formamido-N(1)-(5-O-phospho-beta-D-ribosyl)acetamidine + L-glutamate + ADP + phosphate + H(+). The enzyme catalyses L-glutamine + H2O = L-glutamate + NH4(+). Its pathway is purine metabolism; IMP biosynthesis via de novo pathway; 5-amino-1-(5-phospho-D-ribosyl)imidazole from N(2)-formyl-N(1)-(5-phospho-D-ribosyl)glycinamide: step 1/2. In terms of biological role, part of the phosphoribosylformylglycinamidine synthase complex involved in the purines biosynthetic pathway. Catalyzes the ATP-dependent conversion of formylglycinamide ribonucleotide (FGAR) and glutamine to yield formylglycinamidine ribonucleotide (FGAM) and glutamate. The FGAM synthase complex is composed of three subunits. PurQ produces an ammonia molecule by converting glutamine to glutamate. PurL transfers the ammonia molecule to FGAR to form FGAM in an ATP-dependent manner. PurS interacts with PurQ and PurL and is thought to assist in the transfer of the ammonia molecule from PurQ to PurL. The protein is Phosphoribosylformylglycinamidine synthase subunit PurQ of Rhodococcus jostii (strain RHA1).